A 103-amino-acid polypeptide reads, in one-letter code: Co-chaperonin GroES (103 aa).

It belongs to the GroES chaperonin family. In terms of assembly, heptamer of 7 subunits arranged in a ring. Interacts with the chaperonin GroEL.

It is found in the cytoplasm. Its function is as follows. Together with the chaperonin GroEL, plays an essential role in assisting protein folding. The GroEL-GroES system forms a nano-cage that allows encapsulation of the non-native substrate proteins and provides a physical environment optimized to promote and accelerate protein folding. GroES binds to the apical surface of the GroEL ring, thereby capping the opening of the GroEL channel. This Gloeothece citriformis (strain PCC 7424) (Cyanothece sp. (strain PCC 7424)) protein is Co-chaperonin GroES.